The sequence spans 298 residues: Probable GTP 3',8-cyclase (298 aa).

Residues 4-230 enclose the Radical SAM core domain; the sequence is KFGREIRSLR…RKKYIVDGLE (227 aa). A GTP-binding site is contributed by Arg-13. [4Fe-4S] cluster is bound by residues Cys-20 and Cys-24. Tyr-26 contacts S-adenosyl-L-methionine. Cys-27 serves as a coordination point for [4Fe-4S] cluster. Lys-61 serves as a coordination point for GTP. Gly-65 provides a ligand contact to S-adenosyl-L-methionine. Thr-91 serves as a coordination point for GTP. Ser-115 is a binding site for S-adenosyl-L-methionine. Lys-152 contributes to the GTP binding site. Residues Cys-243 and Cys-246 each coordinate [4Fe-4S] cluster. 248–250 is a binding site for GTP; that stretch reads RIR. Residue Cys-260 coordinates [4Fe-4S] cluster.

The protein belongs to the radical SAM superfamily. MoaA family. Requires [4Fe-4S] cluster as cofactor.

The catalysed reaction is GTP + AH2 + S-adenosyl-L-methionine = (8S)-3',8-cyclo-7,8-dihydroguanosine 5'-triphosphate + 5'-deoxyadenosine + L-methionine + A + H(+). It functions in the pathway cofactor biosynthesis; molybdopterin biosynthesis. In terms of biological role, catalyzes the cyclization of GTP to (8S)-3',8-cyclo-7,8-dihydroguanosine 5'-triphosphate. The polypeptide is Probable GTP 3',8-cyclase (Methanocaldococcus jannaschii (strain ATCC 43067 / DSM 2661 / JAL-1 / JCM 10045 / NBRC 100440) (Methanococcus jannaschii)).